The primary structure comprises 725 residues: MADNENRLESILSRFDADWTASDEARREAKNDLFFSRVSQWDDWLSQYTTLQYRGQFDVVRPVVRKLVSEMRQNPIDVLYRPKDGARPDAADVLMGMYRTDMRHNTAKIAVNIAVREQIEAGVGAWRLVTDYEDQSPTSNNQVIRREPIHSACSHVIWDSNSKLMDKSDARHCTVIHSMSQNGWEDFAEKYDLDADDIPSFQNPNDWVFPWLTQDTIQIAEFYEVVEKKETAFIYQDPVTGEPVSYFKRDIKDVIDDLADSGFIKIAERQIKRRRVYKSIITCTAVLKDKQLIAGEHIPIVPVFGEWGFVEDKEVYEGVVRLTKDGQRLRNMIMSFNADIVARTPKKKPFFWPEQIAGFEHMYDGNDDYPYYLLNRTDENSGDLPTQPLAYYENPEVPQANAYMLEAATSAVKEVATLGVDTEAVNGGQVAFDTVNQLNMRADLETYVFQDNLATAMRRDGEIYQSIVNDIYDVPRNVTITLEDGSEKDVQLMAEVVDLATGEKQVLNDIRGRYECYTDVGPSFQSMKQQNRAEILELLGKTPQGTPEYQLLLLQYFTLLDGKGVEMMRDYANKQLIQMGVKKPETPEEQQWLVEAQQAKQGQQDPAMVQAQGVLLQGQAELAKAQNQTLSLQIDAAKVEAQNQLNAARIAEIFNNMDLSKQSEFREFLKTVASFQQDRSEDARANAELLLKGDEQTHKQRMDIANILQSQRQNQPSGSVAETPQ.

Belongs to the p22likevirus portal protein family. Homododecamer. Interacts with the terminase large subunit; this interaction allows the packaging of viral DNA. Interacts (via C-terminus) with the head-to-tail adapter protein gp4; this interaction participates in the head completion. Interacts with the scaffolding protein; this interaction initiates procapsid assembly, thereby ensuring incorporation of only one portal ring per capsid. Interacts with the capsid protein.

It is found in the virion. Its function is as follows. Forms the portal vertex of the capsid. This portal plays critical roles in head assembly, genome packaging, neck/tail attachment, and genome ejection. Procapsid assembly may initiate with a nucleation complex composed of portal and scaffolding proteins. The portal protein multimerizes as a single ring-shaped homododecamer arranged around a central channel. Switches upon genome packaging from an asymmetrical conformation in the procapsid (PC-portal) to a symmetrical ring in the mature capsid (MV-portal). This change of conformation may serve as a signal for headful packaging. This is Portal protein (1) from Salmonella typhimurium (Bacteriophage P22).